A 110-amino-acid chain; its full sequence is Lichenan-specific phosphotransferase enzyme IIA component (110 aa).

The 99-residue stretch at 3 to 101 (EEMEQIIFQI…AAEIIELYEK (99 aa)) folds into the PTS EIIA type-3 domain. The active-site Tele-phosphohistidine intermediate; by HPr is H77.

It localises to the cytoplasm. Its function is as follows. The phosphoenolpyruvate-dependent sugar phosphotransferase system (PTS), a major carbohydrate active -transport system, catalyzes the phosphorylation of incoming sugar substrates concomitant with their translocation across the cell membrane. This system is involved in lichenan transport. The polypeptide is Lichenan-specific phosphotransferase enzyme IIA component (licA) (Bacillus subtilis (strain 168)).